A 70-amino-acid chain; its full sequence is Waprin-Thr1 (70 aa).

A signal peptide spans 1–19; that stretch reads MKARLLLLSVVILVGMVSA. The 51-residue stretch at 20 to 70 folds into the WAP domain; the sequence is ENEKAGSCPDVNQPIPPLGLCRNMCESDSGCPNNEKCCKNGCGFMTCSRPR. 4 disulfide bridges follow: Cys-27–Cys-57, Cys-40–Cys-61, Cys-44–Cys-56, and Cys-50–Cys-66.

The protein belongs to the venom waprin family. Expressed by the venom gland.

The protein localises to the secreted. In terms of biological role, damages membranes of susceptible bacteria. Has no hemolytic activity. Not toxic to mice. Does not inhibit the proteinases elastase and cathepsin G. The chain is Waprin-Thr1 from Thrasops jacksonii (Jackson's black tree snake).